Reading from the N-terminus, the 639-residue chain is Probable potassium transport system protein Kup 1 (639 aa).

The next 12 membrane-spanning stretches (helical) occupy residues 27–47 (AILG…LYAF), 64–84 (VIGL…FKYI), 115–135 (VLIV…MITP), 151–171 (PAMD…LFAI), 182–202 (FFGP…LIHI), 225–245 (GFYG…AEAL), 261–281 (WFCL…ALVL), 293–313 (LMFP…ATII), 351–371 (IYLP…VLTF), 377–397 (LATA…LMFF), 408–428 (IWLA…FLGA), and 430–450 (LLKI…FTVI).

The protein belongs to the HAK/KUP transporter (TC 2.A.72) family.

It localises to the cell inner membrane. The catalysed reaction is K(+)(in) + H(+)(in) = K(+)(out) + H(+)(out). In terms of biological role, transport of potassium into the cell. Likely operates as a K(+):H(+) symporter. The sequence is that of Probable potassium transport system protein Kup 1 from Agrobacterium fabrum (strain C58 / ATCC 33970) (Agrobacterium tumefaciens (strain C58)).